The chain runs to 196 residues: Nucleoside triphosphate pyrophosphatase (196 aa).

Aspartate 73 acts as the Proton acceptor in catalysis.

This sequence belongs to the Maf family. The cofactor is a divalent metal cation.

The protein resides in the cytoplasm. It carries out the reaction a ribonucleoside 5'-triphosphate + H2O = a ribonucleoside 5'-phosphate + diphosphate + H(+). The catalysed reaction is a 2'-deoxyribonucleoside 5'-triphosphate + H2O = a 2'-deoxyribonucleoside 5'-phosphate + diphosphate + H(+). Nucleoside triphosphate pyrophosphatase. May have a dual role in cell division arrest and in preventing the incorporation of modified nucleotides into cellular nucleic acids. The polypeptide is Nucleoside triphosphate pyrophosphatase (Anaplasma marginale (strain Florida)).